Here is a 347-residue protein sequence, read N- to C-terminus: Histone deacetylase 11 (347 aa).

Residues 14–318 are histone deacetylase; sequence KRWPIVYSPR…ARIIADSILN (305 aa). H143 is an active-site residue.

This sequence belongs to the histone deacetylase family. As to quaternary structure, interacts with HDAC6.

It is found in the nucleus. The enzyme catalyses N(6)-acetyl-L-lysyl-[histone] + H2O = L-lysyl-[histone] + acetate. Its function is as follows. Responsible for the deacetylation of lysine residues on the N-terminal part of the core histones (H2A, H2B, H3 and H4). Histone deacetylation gives a tag for epigenetic repression and plays an important role in transcriptional regulation, cell cycle progression and developmental events. Histone deacetylases act via the formation of large multiprotein complexes. In Mus musculus (Mouse), this protein is Histone deacetylase 11 (Hdac11).